Reading from the N-terminus, the 333-residue chain is Cytochrome f (333 aa).

A signal peptide spans 1 to 44; it reads MRNASVTARLTRSVRAIVKTLLIAIATVTFYFSCDLALPQSAAA. Tyr-45, Cys-66, Cys-69, and His-70 together coordinate heme. A helical membrane pass occupies residues 301 to 318; the sequence is GLIAFVALVMLAQVMLVL.

It belongs to the cytochrome f family. The 4 large subunits of the cytochrome b6-f complex are cytochrome b6, subunit IV (17 kDa polypeptide, PetD), cytochrome f and the Rieske protein, while the 4 small subunits are PetG, PetL, PetM and PetN. The complex functions as a dimer. Requires heme as cofactor.

It localises to the cellular thylakoid membrane. In terms of biological role, component of the cytochrome b6-f complex, which mediates electron transfer between photosystem II (PSII) and photosystem I (PSI), cyclic electron flow around PSI, and state transitions. The protein is Cytochrome f (petA) of Desmonostoc sp. (strain PCC 7906) (Nostoc sp. (strain PCC 7906)).